Reading from the N-terminus, the 385-residue chain is MSWQQRVDDALTARRATDTLRRRYVVSQGAGRWLVANGRQYLNFSSNDYLGLSQHPQIIRAWQQAAMRFGVGSGGSGHISGYSVAHQALEEELAQWLGYPRALLFISGFAANQAVITALMKKNDRIVADRLSHASLLEAANLSPAQLRRFIHNDTQHLSRLLQSPCVGQQLVVTEGVYSMDGDSAPLAEIQHIARRHHAWLLVDDAHGIGVTGDEGRGTCWQRGVKPELLVVTFGKGFGVSGAAVLCSESVADYLLQFARHLVYSTSMPPAQAQALSASLAVIRSDEGGERREKLAALVQRFRAGVNASRFTLLNAHSAIQPLIVGDNSHALRLAEALRQQGCWATAIRPPTVPVGTARLRLTLTQAHEACDIDRLLEVLHGAGE.

Arginine 21 is a binding site for substrate. A pyridoxal 5'-phosphate-binding site is contributed by 108-109 (GF). Histidine 133 is a binding site for substrate. Residues serine 179, histidine 207, and threonine 233 each coordinate pyridoxal 5'-phosphate. At lysine 236 the chain carries N6-(pyridoxal phosphate)lysine. Residue threonine 352 participates in substrate binding.

It belongs to the class-II pyridoxal-phosphate-dependent aminotransferase family. BioF subfamily. As to quaternary structure, homodimer. Pyridoxal 5'-phosphate serves as cofactor.

It catalyses the reaction 6-carboxyhexanoyl-[ACP] + L-alanine + H(+) = (8S)-8-amino-7-oxononanoate + holo-[ACP] + CO2. It functions in the pathway cofactor biosynthesis; biotin biosynthesis. Catalyzes the decarboxylative condensation of pimeloyl-[acyl-carrier protein] and L-alanine to produce 8-amino-7-oxononanoate (AON), [acyl-carrier protein], and carbon dioxide. This Salmonella schwarzengrund (strain CVM19633) protein is 8-amino-7-oxononanoate synthase.